A 220-amino-acid chain; its full sequence is Deoxyribose-phosphate aldolase (220 aa).

The active-site Proton donor/acceptor is aspartate 89. Lysine 152 (schiff-base intermediate with acetaldehyde) is an active-site residue. The active-site Proton donor/acceptor is the lysine 181.

This sequence belongs to the DeoC/FbaB aldolase family. DeoC type 1 subfamily.

Its subcellular location is the cytoplasm. The catalysed reaction is 2-deoxy-D-ribose 5-phosphate = D-glyceraldehyde 3-phosphate + acetaldehyde. Its pathway is carbohydrate degradation; 2-deoxy-D-ribose 1-phosphate degradation; D-glyceraldehyde 3-phosphate and acetaldehyde from 2-deoxy-alpha-D-ribose 1-phosphate: step 2/2. In terms of biological role, catalyzes a reversible aldol reaction between acetaldehyde and D-glyceraldehyde 3-phosphate to generate 2-deoxy-D-ribose 5-phosphate. The polypeptide is Deoxyribose-phosphate aldolase (Enterococcus faecalis (strain ATCC 700802 / V583)).